Consider the following 306-residue polypeptide: MMSNDSQSEKRTAKWTGSGTPIAEGEESSSPSAHQTRQKATAADDDDDQQITDLEQELAELDLEEQRKAKKKRIASLQRQIEEKRNKLATVEISDLNEKENKNVVNVADGLAWSYYSGYLKLVLPRLEQRISESEKFRHKITDKKLYILLPKSCFTCDDIEHADSRVKWAGNLPESKINRGGIKERSYKHAVHEIVMPPFPDGTGEKYHFIVEYATPLMTLYDMSKFADAQLTDPERDHQVLLFMQKLTELLEKSKDCKGQYDCRGKYELVSFDEEEDKIADILIARHNNANKVGEESEELSIPVQ.

The disordered stretch occupies residues 1–50 (MMSNDSQSEKRTAKWTGSGTPIAEGEESSSPSAHQTRQKATAADDDDDQQ). Positions 119, 180, and 186 each coordinate 2',3'-cGAMP.

It belongs to the STING family.

Its function is as follows. Facilitator of innate immune signaling that acts as a sensor of second messenger signals produced by cyclic GMP-AMP synthase-like receptors (cGLRs) and promotes the production of type I interferon. Innate immune response is triggered in response to nucleotides from viruses and bacteria delivered to the cytoplasm. Acts by binding cyclic dinucleotides: recognizes and binds 2'-3' linked cGAMP (2'-3'-cGAMP), a second messengers produced by cGLRs in response to nucleotides in the cytosol, such as double-stranded RNA (dsRNA). Upon binding to 2'-3'-cGAMP, oligomerizes and promotes the recruitment and subsequent activation of the transcription factor IRF3 to induce expression of type I interferon. This chain is Stimulator of interferon genes protein 5, found in Stylophora pistillata (Smooth cauliflower coral).